Here is a 1234-residue protein sequence, read N- to C-terminus: PAN2-PAN3 deadenylation complex catalytic subunit PAN2 (1234 aa).

The disordered stretch occupies residues 12-32 (LKNSNNNSNSNSSSNNSSNGV). The span at 14-30 (NSNNNSNSNSSSNNSSN) shows a compositional bias: low complexity. WD repeat units follow at residues 176-213 (NHTG…SIKT), 272-315 (AFPA…VYHA), and 342-381 (QQQP…TLSK). The interval 323-346 (PLPPAGSSAAQQQKQQQQQQQQPH) is disordered. A compositionally biased stretch (low complexity) spans 333–344 (QQQKQQQQQQQQ). The interval 383-537 (FVNFPQEIER…DSIFQCQNDE (155 aa)) is linker. Positions 538 to 946 (KIPNCYSRLQ…KPVIVIYQEV (409 aa)) constitute a USP domain. The disordered stretch occupies residues 751–775 (PNTQQDQQQQQQQQQQQQQQQQPTN). Residues 754-772 (QQDQQQQQQQQQQQQQQQQ) are compositionally biased toward low complexity. A divalent metal cation contacts are provided by D1004, E1006, D1138, and D1191. The Exonuclease domain occupies 1072–1199 (GEAFIDDYIV…EDARTALLLY (128 aa)).

Belongs to the peptidase C19 family. PAN2 subfamily. Forms a heterotrimer with an asymmetric homodimer of the regulatory subunit PAN3 to form the poly(A)-nuclease (PAN) deadenylation complex. It depends on a divalent metal cation as a cofactor.

It localises to the cytoplasm. The catalysed reaction is Exonucleolytic cleavage of poly(A) to 5'-AMP.. Its activity is regulated as follows. Positively regulated by the regulatory subunit PAN3. Functionally, catalytic subunit of the poly(A)-nuclease (PAN) deadenylation complex, one of two cytoplasmic mRNA deadenylases involved in mRNA turnover. PAN specifically shortens poly(A) tails of RNA and the activity is stimulated by poly(A)-binding protein PAB1. PAN deadenylation is followed by rapid degradation of the shortened mRNA tails by the CCR4-NOT complex. Deadenylated mRNAs are then degraded by two alternative mechanisms, namely exosome-mediated 3'-5' exonucleolytic degradation, or deadenylation-dependent mRNA decaping and subsequent 5'-3' exonucleolytic degradation by XRN1. May also be involved in post-transcriptional maturation of mRNA poly(A) tails. The sequence is that of PAN2-PAN3 deadenylation complex catalytic subunit PAN2 from Lodderomyces elongisporus (strain ATCC 11503 / CBS 2605 / JCM 1781 / NBRC 1676 / NRRL YB-4239) (Yeast).